A 254-amino-acid chain; its full sequence is Thiazole synthase (254 aa).

The active-site Schiff-base intermediate with DXP is lysine 95. Residues glycine 156, alanine 182 to glycine 183, and asparagine 204 to threonine 205 contribute to the 1-deoxy-D-xylulose 5-phosphate site.

It belongs to the ThiG family. As to quaternary structure, homotetramer. Forms heterodimers with either ThiH or ThiS.

It localises to the cytoplasm. The enzyme catalyses [ThiS sulfur-carrier protein]-C-terminal-Gly-aminoethanethioate + 2-iminoacetate + 1-deoxy-D-xylulose 5-phosphate = [ThiS sulfur-carrier protein]-C-terminal Gly-Gly + 2-[(2R,5Z)-2-carboxy-4-methylthiazol-5(2H)-ylidene]ethyl phosphate + 2 H2O + H(+). It functions in the pathway cofactor biosynthesis; thiamine diphosphate biosynthesis. In terms of biological role, catalyzes the rearrangement of 1-deoxy-D-xylulose 5-phosphate (DXP) to produce the thiazole phosphate moiety of thiamine. Sulfur is provided by the thiocarboxylate moiety of the carrier protein ThiS. In vitro, sulfur can be provided by H(2)S. The chain is Thiazole synthase from Shewanella oneidensis (strain ATCC 700550 / JCM 31522 / CIP 106686 / LMG 19005 / NCIMB 14063 / MR-1).